A 1203-amino-acid chain; its full sequence is DNA-directed RNA polymerase I subunit RPA135 (1203 aa).

Position 2 is an N-acetylserine (S2). Position 81 is a phosphoserine (S81). A C4-type zinc finger spans residues 1104-1131; it reads CRECGSILTTQQSVPRIGSISTVCCRRC. Residue S1156 is modified to Phosphoserine.

It belongs to the RNA polymerase beta chain family. Component of the RNA polymerase I (Pol I) complex consisting of 14 subunits: RPA135, RPA190, RPC40, RPA14, RPB5, RPO26, RPA43, RPB8, RPA12, RPB10, RPC19, RPC10, RPA49 and RPA34. The complex is composed of a horseshoe-shaped core containing ten subunits (RPA135, RPA190, RPB5, RPO26, RPB8, RPB10, RPC10, RPA12, RPC19 and RPC40) where RPA135 and RPA190 form the DNA-binding cleft. Outside of the core, RPA14 and RPA43 form the stalk that mediates interactions with transcription initiation factors and newly synthesized RNA.

The protein resides in the nucleus. It localises to the nucleolus. The catalysed reaction is RNA(n) + a ribonucleoside 5'-triphosphate = RNA(n+1) + diphosphate. Its function is as follows. DNA-dependent RNA polymerases catalyze the transcription of DNA into RNA using the four ribonucleoside triphosphates as substrates. Component of RNA polymerase I (Pol I) which synthesizes ribosomal RNA precursors. Besides, RNA polymerase I has intrinsic RNA cleavage activity. RPA190 and RPA135 both contribute to the polymerase catalytic activity and together form the Pol I active center. In addition, subunit RPA12 contributes a catalytic zinc ribbon that is required for RNA cleavage by Pol I. A single stranded DNA template strand of the promoter is positioned within the central active site cleft of Pol I. A bridging helix emanates from RPA190 and crosses the cleft near the catalytic site and is thought to promote translocation of Pol I by acting as a ratchet that moves the RNA-DNA hybrid through the active site by switching from straight to bent conformations at each step of nucleotide addition. This is DNA-directed RNA polymerase I subunit RPA135 (RPA135) from Saccharomyces cerevisiae (strain ATCC 204508 / S288c) (Baker's yeast).